The sequence spans 60 residues: MAVQQNKKSRSARDMRRSHDALSENALSVEKTTGEVHLRHHVSPEGVYRGRKVVDKGADE.

The segment at 1–60 is disordered; the sequence is MAVQQNKKSRSARDMRRSHDALSENALSVEKTTGEVHLRHHVSPEGVYRGRKVVDKGADE. Positions 11 to 22 are enriched in basic and acidic residues; that stretch reads SARDMRRSHDAL.

It belongs to the bacterial ribosomal protein bL32 family.

The protein is Large ribosomal subunit protein bL32 of Pseudomonas putida (strain ATCC 700007 / DSM 6899 / JCM 31910 / BCRC 17059 / LMG 24140 / F1).